We begin with the raw amino-acid sequence, 594 residues long: Chondroitin sulfate proteoglycan 5 (594 aa).

The span at Met1–Ala12 shows a compositional bias: polar residues. The first 18 residues, Met1–Thr18, serve as a signal peptide directing secretion. Disordered stretches follow at residues Met1–Leu325 and Thr343–Arg418. The Extracellular segment spans residues Ala19 to Cys481. N-linked (GlcNAc...) asparagine glycosylation is found at Asn26 and Asn44. Positions Ser140–Pro181 are enriched in low complexity. Composition is skewed to pro residues over residues Ser182–Asn195 and Ile219–Gly229. Over residues Pro248–Arg259 the composition is skewed to low complexity. Positions Gly298–Gly310 are enriched in gly residues. Residues Ala338 to Gly377 form an interaction with TNC and TNR region. Acidic residues predominate over residues Glu349–Glu375. N-linked (GlcNAc...) asparagine glycosylation is found at Asn413 and Asn425. The EGF-like domain occupies Arg429–Glu471. 3 cysteine pairs are disulfide-bonded: Cys432–Cys445, Cys439–Cys455, and Cys457–Cys470. A helical transmembrane segment spans residues Val482 to Ala502. Topologically, residues Lys503–Gly594 are cytoplasmic. A disordered region spans residues Thr535–Gly594. The span at His541–Glu564 shows a compositional bias: basic and acidic residues.

As to quaternary structure, binds TNC and TNR. The 80 kDa form but not the 140 kDa form can bind TNC and TNR when expressed at the cell surface. In terms of processing, different forms exist: the 140 kDa form (also reported as 130 kDa), which probably consists of the entire protein, and the 38 and 80 kDa forms, which are probably cleaved in their N-terminus. Increase in synaptic activity, results in shedding of the extracellular domain and expression at the cell surface of a 38 kDa form. A form of 200 kDa has also been reported, which is probably hyperglycosylated. Post-translationally, N-glycosylated. O-glycosylated; contains chondroitin sulfate glycans. Part-time proteoglycan, the 200 kDa form is the only one containing chondroitin sulfate glycans. As to expression, expressed in astroglial and neuronal surfaces in different parts of the embryonic brain. Expressed in adult brain and retina (at protein level).

It localises to the cell membrane. Its function is as follows. May function as a growth and differentiation factor involved in neuritogenesis and more particularly in neurite extension. This chain is Chondroitin sulfate proteoglycan 5 (CSPG5), found in Gallus gallus (Chicken).